A 243-amino-acid polypeptide reads, in one-letter code: MSEMIYGIHAVQALLERAPERFQEVFILKGREDKRLLPLIHALESQGVVIQLANRQYLDEKSDGAVHQGIIARVKPGRQYQENDLPDLIASLDQPFLLILDGVTDPHNLGACLRSADAAGVHAVIVPKDRSAQLNATAKKVACGAAESVPLIRVTNLARTMRMLQEENIWIVGTAGEADHTLYQSKMTGRLALVMGAEGEGMRRLTREHCDELISIPMAGSVSSLNVSVATGICLFEAVRQRS.

S-adenosyl-L-methionine-binding residues include Gly-196, Ile-216, and Leu-225.

This sequence belongs to the class IV-like SAM-binding methyltransferase superfamily. RNA methyltransferase TrmH family. RlmB subfamily. As to quaternary structure, homodimer.

It localises to the cytoplasm. The catalysed reaction is guanosine(2251) in 23S rRNA + S-adenosyl-L-methionine = 2'-O-methylguanosine(2251) in 23S rRNA + S-adenosyl-L-homocysteine + H(+). Functionally, specifically methylates the ribose of guanosine 2251 in 23S rRNA. The sequence is that of 23S rRNA (guanosine-2'-O-)-methyltransferase RlmB from Shigella flexneri.